We begin with the raw amino-acid sequence, 206 residues long: Guanylate kinase (206 aa).

Residues 5-183 (FNLLILSGPS…SKEIILSIAK (179 aa)) enclose the Guanylate kinase-like domain. Residue 12–19 (GPSGAGKS) participates in ATP binding.

Belongs to the guanylate kinase family.

Its subcellular location is the cytoplasm. The catalysed reaction is GMP + ATP = GDP + ADP. Essential for recycling GMP and indirectly, cGMP. The chain is Guanylate kinase (gmk) from Helicobacter pylori (strain J99 / ATCC 700824) (Campylobacter pylori J99).